Consider the following 589-residue polypeptide: Isocitrate dehydrogenase kinase/phosphatase (589 aa).

ATP contacts are provided by residues 322–328 and Lys343; that span reads APGIRGL. Asp378 is a catalytic residue.

It belongs to the AceK family.

The protein localises to the cytoplasm. It catalyses the reaction L-seryl-[isocitrate dehydrogenase] + ATP = O-phospho-L-seryl-[isocitrate dehydrogenase] + ADP + H(+). Bifunctional enzyme which can phosphorylate or dephosphorylate isocitrate dehydrogenase (IDH) on a specific serine residue. This is a regulatory mechanism which enables bacteria to bypass the Krebs cycle via the glyoxylate shunt in response to the source of carbon. When bacteria are grown on glucose, IDH is fully active and unphosphorylated, but when grown on acetate or ethanol, the activity of IDH declines drastically concomitant with its phosphorylation. The polypeptide is Isocitrate dehydrogenase kinase/phosphatase (Azoarcus sp. (strain BH72)).